Consider the following 431-residue polypeptide: Tol-Pal system protein TolB (431 aa).

Residues 1–19 form the signal peptide; sequence MKRLLFFLICVFFSKTSYS.

This sequence belongs to the TolB family. In terms of assembly, the Tol-Pal system is composed of five core proteins: the inner membrane proteins TolA, TolQ and TolR, the periplasmic protein TolB and the outer membrane protein Pal. They form a network linking the inner and outer membranes and the peptidoglycan layer.

It localises to the periplasm. In terms of biological role, part of the Tol-Pal system, which plays a role in outer membrane invagination during cell division and is important for maintaining outer membrane integrity. TolB occupies a key intermediary position in the Tol-Pal system because it communicates directly with both membrane-embedded components, Pal in the outer membrane and TolA in the inner membrane. The protein is Tol-Pal system protein TolB of Wigglesworthia glossinidia brevipalpis.